A 445-amino-acid polypeptide reads, in one-letter code: tRNA modification GTPase MnmE (445 aa).

(6S)-5-formyl-5,6,7,8-tetrahydrofolate is bound by residues Arg20, Glu79, and Lys119. Residues 215-371 (GLKLAIIGPP…ILKNIENIAE (157 aa)) enclose the TrmE-type G domain. Residue Asn225 coordinates K(+). Residues 225–230 (NAGKSS), 244–250 (SNIAGTT), and 269–272 (DTAG) each bind GTP. Mg(2+) is bound at residue Ser229. Positions 244, 246, and 249 each coordinate K(+). Thr250 serves as a coordination point for Mg(2+). Residue Lys445 coordinates (6S)-5-formyl-5,6,7,8-tetrahydrofolate.

Belongs to the TRAFAC class TrmE-Era-EngA-EngB-Septin-like GTPase superfamily. TrmE GTPase family. Homodimer. Heterotetramer of two MnmE and two MnmG subunits. It depends on K(+) as a cofactor.

Its subcellular location is the cytoplasm. Functionally, exhibits a very high intrinsic GTPase hydrolysis rate. Involved in the addition of a carboxymethylaminomethyl (cmnm) group at the wobble position (U34) of certain tRNAs, forming tRNA-cmnm(5)s(2)U34. The protein is tRNA modification GTPase MnmE of Rickettsia canadensis (strain McKiel).